The following is a 141-amino-acid chain: Nucleoside diphosphate kinase (141 aa).

ATP is bound by residues Lys11, Phe59, Arg87, Thr93, Arg104, and Asn114. The active-site Pros-phosphohistidine intermediate is the His117.

It belongs to the NDK family. Homotetramer. The cofactor is Mg(2+).

It is found in the cytoplasm. It carries out the reaction a 2'-deoxyribonucleoside 5'-diphosphate + ATP = a 2'-deoxyribonucleoside 5'-triphosphate + ADP. The enzyme catalyses a ribonucleoside 5'-diphosphate + ATP = a ribonucleoside 5'-triphosphate + ADP. Its function is as follows. Major role in the synthesis of nucleoside triphosphates other than ATP. The ATP gamma phosphate is transferred to the NDP beta phosphate via a ping-pong mechanism, using a phosphorylated active-site intermediate. This chain is Nucleoside diphosphate kinase, found in Cellvibrio japonicus (strain Ueda107) (Pseudomonas fluorescens subsp. cellulosa).